A 447-amino-acid chain; its full sequence is Bifunctional protein GlmU (447 aa).

The tract at residues 1-225 (MLTVAILAAG…NGELQGINNR (225 aa)) is pyrophosphorylase. UDP-N-acetyl-alpha-D-glucosamine contacts are provided by residues 7–10 (LAAG), Lys21, Gln73, and 78–79 (GT). Residue Asp103 coordinates Mg(2+). UDP-N-acetyl-alpha-D-glucosamine-binding residues include Gly140, Glu154, Asn169, and Asn223. Residue Asn223 coordinates Mg(2+). The segment at 226–246 (VQLSKCEETIQNLIKEKHMLG) is linker. Residues 247 to 447 (GVTFINPASC…QVNIENWKKN (201 aa)) are N-acetyltransferase. Positions 328 and 346 each coordinate UDP-N-acetyl-alpha-D-glucosamine. The active-site Proton acceptor is the His358. Residues Tyr361 and Asn372 each contribute to the UDP-N-acetyl-alpha-D-glucosamine site. Ala375, Ala418, and Arg435 together coordinate acetyl-CoA.

This sequence in the N-terminal section; belongs to the N-acetylglucosamine-1-phosphate uridyltransferase family. It in the C-terminal section; belongs to the transferase hexapeptide repeat family. In terms of assembly, homotrimer. It depends on Mg(2+) as a cofactor.

The protein resides in the cytoplasm. It carries out the reaction alpha-D-glucosamine 1-phosphate + acetyl-CoA = N-acetyl-alpha-D-glucosamine 1-phosphate + CoA + H(+). The catalysed reaction is N-acetyl-alpha-D-glucosamine 1-phosphate + UTP + H(+) = UDP-N-acetyl-alpha-D-glucosamine + diphosphate. It functions in the pathway nucleotide-sugar biosynthesis; UDP-N-acetyl-alpha-D-glucosamine biosynthesis; N-acetyl-alpha-D-glucosamine 1-phosphate from alpha-D-glucosamine 6-phosphate (route II): step 2/2. The protein operates within nucleotide-sugar biosynthesis; UDP-N-acetyl-alpha-D-glucosamine biosynthesis; UDP-N-acetyl-alpha-D-glucosamine from N-acetyl-alpha-D-glucosamine 1-phosphate: step 1/1. Its pathway is bacterial outer membrane biogenesis; LPS lipid A biosynthesis. Catalyzes the last two sequential reactions in the de novo biosynthetic pathway for UDP-N-acetylglucosamine (UDP-GlcNAc). The C-terminal domain catalyzes the transfer of acetyl group from acetyl coenzyme A to glucosamine-1-phosphate (GlcN-1-P) to produce N-acetylglucosamine-1-phosphate (GlcNAc-1-P), which is converted into UDP-GlcNAc by the transfer of uridine 5-monophosphate (from uridine 5-triphosphate), a reaction catalyzed by the N-terminal domain. This Prochlorococcus marinus (strain MIT 9515) protein is Bifunctional protein GlmU.